The primary structure comprises 362 residues: MYQLNQNQTVNTPQKYRPRLALTVGDPGGIGAEVILKALADLEIGHNYDLTVVSNKNLLQETYKQLSSMENLLPLADPNLLKIIDVTVDRETARQINLGTGNAASGAASFAYMDYAIAQTLAGNFDGIVTGPIAKSAWKAAGYNYPGQTELLAQKSGVERFGMLFVARSPYTGWTLRALLATTHIPLRQVADTLTPQLLTQKLDLLVECLEKDFGITSGRIAIAGLNPHSGEQGQLGTEELDWLIPWLESERQKRPHFQLDGPIPPDTMWVKPGQAWYGNAIVQHPADAYLALYHDQGLIPVKLMAFDRAVNTSIGLPFVRTSPDHGTAFDIAGQGIADATSMKEAISLAAELVCQRLHLEK.

Threonine 149 is a substrate binding site. Residues histidine 184, histidine 229, and histidine 295 each contribute to the a divalent metal cation site. Substrate is bound by residues lysine 303, asparagine 312, and arginine 321.

This sequence belongs to the PdxA family. Homodimer. A divalent metal cation serves as cofactor.

The protein localises to the cytoplasm. It catalyses the reaction 4-(phosphooxy)-L-threonine + NAD(+) = 3-amino-2-oxopropyl phosphate + CO2 + NADH. Its pathway is cofactor biosynthesis; pyridoxine 5'-phosphate biosynthesis; pyridoxine 5'-phosphate from D-erythrose 4-phosphate: step 4/5. Its function is as follows. Catalyzes the NAD(P)-dependent oxidation of 4-(phosphooxy)-L-threonine (HTP) into 2-amino-3-oxo-4-(phosphooxy)butyric acid which spontaneously decarboxylates to form 3-amino-2-oxopropyl phosphate (AHAP). In Nostoc sp. (strain PCC 7120 / SAG 25.82 / UTEX 2576), this protein is 4-hydroxythreonine-4-phosphate dehydrogenase.